Consider the following 281-residue polypeptide: Bifunctional protein FolD (281 aa).

Residues 165–167, T192, and V233 each bind NADP(+); that span reads GRG.

The protein belongs to the tetrahydrofolate dehydrogenase/cyclohydrolase family. As to quaternary structure, homodimer.

The enzyme catalyses (6R)-5,10-methylene-5,6,7,8-tetrahydrofolate + NADP(+) = (6R)-5,10-methenyltetrahydrofolate + NADPH. It carries out the reaction (6R)-5,10-methenyltetrahydrofolate + H2O = (6R)-10-formyltetrahydrofolate + H(+). Its pathway is one-carbon metabolism; tetrahydrofolate interconversion. Its function is as follows. Catalyzes the oxidation of 5,10-methylenetetrahydrofolate to 5,10-methenyltetrahydrofolate and then the hydrolysis of 5,10-methenyltetrahydrofolate to 10-formyltetrahydrofolate. The sequence is that of Bifunctional protein FolD from Mycobacterium marinum (strain ATCC BAA-535 / M).